The chain runs to 95 residues: Aspartyl/glutamyl-tRNA(Asn/Gln) amidotransferase subunit C (95 aa).

It belongs to the GatC family. In terms of assembly, heterotrimer of A, B and C subunits.

It catalyses the reaction L-glutamyl-tRNA(Gln) + L-glutamine + ATP + H2O = L-glutaminyl-tRNA(Gln) + L-glutamate + ADP + phosphate + H(+). It carries out the reaction L-aspartyl-tRNA(Asn) + L-glutamine + ATP + H2O = L-asparaginyl-tRNA(Asn) + L-glutamate + ADP + phosphate + 2 H(+). Its function is as follows. Allows the formation of correctly charged Asn-tRNA(Asn) or Gln-tRNA(Gln) through the transamidation of misacylated Asp-tRNA(Asn) or Glu-tRNA(Gln) in organisms which lack either or both of asparaginyl-tRNA or glutaminyl-tRNA synthetases. The reaction takes place in the presence of glutamine and ATP through an activated phospho-Asp-tRNA(Asn) or phospho-Glu-tRNA(Gln). In Chlorobaculum tepidum (strain ATCC 49652 / DSM 12025 / NBRC 103806 / TLS) (Chlorobium tepidum), this protein is Aspartyl/glutamyl-tRNA(Asn/Gln) amidotransferase subunit C.